The sequence spans 119 residues: RNA guanine-N7 methyltransferase activating subunit (119 aa).

The tract at residues 1–55 is interaction with RNMT; it reads MSDTSEEIPNFEEMFASRFTKDDKEYQEYLKRPPESPPIVEEWNSRAGGNQRNRG. The interval 30-119 is disordered; it reads LKRPPESPPI…HNQRPPYGYY (90 aa). Ser36 carries the phosphoserine modification. Residues 36-42 carry the RNMT-activating domain motif; the sequence is SPPIVEE. Residues 47-61 show a composition bias toward polar residues; it reads AGGNQRNRGNWLQDN. The RNA-binding stretch occupies residues 56–119; it reads NWLQDNRQFR…HNQRPPYGYY (64 aa). A compositionally biased stretch (basic and acidic residues) spans 62–73; sequence RQFRGRDNRRGW. Arg85 is subject to Omega-N-methylarginine. Ser86 is modified (phosphoserine). Residues 89 to 112 show a composition bias toward low complexity; it reads NNNYPQQRPEPYYQQQYTQYGHNQ.

Belongs to the RAM family. Interacts with RNMT; this interaction enhances mRNA binding and cap methyltransferase activity.

The protein localises to the nucleus. Regulatory subunit of the mRNA-capping methyltransferase RNMT:RAMAC complex that methylates the N7 position of the added guanosine to the 5'-cap structure of mRNAs. Promotes the recruitment of the methyl donor, S-adenosyl-L-methionine, to RNMT. Regulates RNMT expression by a post-transcriptional stabilizing mechanism. Binds RNA. The sequence is that of RNA guanine-N7 methyltransferase activating subunit (Ramac) from Mus musculus (Mouse).